Consider the following 93-residue polypeptide: uncharacterized protein (93 aa).

A run of 2 helical transmembrane segments spans residues 8 to 28 (FIGI…LLAS) and 54 to 74 (ACFL…YLIL).

Its subcellular location is the cell membrane. This is an uncharacterized protein from Methanocaldococcus jannaschii (strain ATCC 43067 / DSM 2661 / JAL-1 / JCM 10045 / NBRC 100440) (Methanococcus jannaschii).